A 197-amino-acid chain; its full sequence is Scoloptoxin SSD20 (197 aa).

The N-terminal stretch at 1 to 6 is a signal peptide; sequence PPMTTE.

In terms of tissue distribution, expressed by the venom gland.

The protein localises to the secreted. Its function is as follows. May act as a voltage-gated potassium channel inhibitor. Is highly similar to the subunit beta of SSD14 which, when complexed with subunit alpha, induces platelet aggregation and hemolysis. The polypeptide is Scoloptoxin SSD20 (Scolopendra dehaani (Thai centipede)).